An 862-amino-acid polypeptide reads, in one-letter code: Protein translocase subunit SecA (862 aa).

ATP is bound by residues Gln-88, Gly-106–Thr-110, and Asp-506. Residues Cys-839, Cys-841, Cys-850, and His-851 each coordinate Zn(2+).

Belongs to the SecA family. Monomer and homodimer. Part of the essential Sec protein translocation apparatus which comprises SecA, SecYEG and auxiliary proteins SecDF-YajC and YidC. Zn(2+) serves as cofactor.

Its subcellular location is the cell inner membrane. It localises to the cytoplasm. The enzyme catalyses ATP + H2O + cellular proteinSide 1 = ADP + phosphate + cellular proteinSide 2.. Its function is as follows. Part of the Sec protein translocase complex. Interacts with the SecYEG preprotein conducting channel. Has a central role in coupling the hydrolysis of ATP to the transfer of proteins into and across the cell membrane, serving as an ATP-driven molecular motor driving the stepwise translocation of polypeptide chains across the membrane. This is Protein translocase subunit SecA from Campylobacter jejuni subsp. jejuni serotype O:2 (strain ATCC 700819 / NCTC 11168).